The sequence spans 289 residues: uncharacterized protein (289 aa).

This is an uncharacterized protein from Escherichia coli (strain K12).